We begin with the raw amino-acid sequence, 489 residues long: Transcription factor TGAL11 (489 aa).

Low complexity predominate over residues 87 to 99 (AATATATARPPAT). Residues 87–181 (AATATATARP…SDHRMTKTLD (95 aa)) form a disordered region. Positions 121-139 (SNVTADTTDSESSSKNNGD) are enriched in polar residues. The segment covering 148–159 (ASQFDQIPQQQQ) has biased composition (low complexity). The segment covering 171–181 (HSDHRMTKTLD) has biased composition (basic and acidic residues). Residues 181-225 (DPKIMRRLAQNREAARKSRLRKKAYIQQLESSKLRLAQMEQDLER) enclose the bZIP domain. Residues 183–203 (KIMRRLAQNREAARKSRLRKK) form a basic motif region. The leucine-zipper stretch occupies residues 209-223 (LESSKLRLAQMEQDL). The DOG1 domain maps to 245-460 (AAMFDAEYGR…RALSSLWASR (216 aa)).

This sequence belongs to the bZIP family.

The protein localises to the nucleus. Functionally, transcriptional regulator involved in defense response. This Oryza sativa subsp. japonica (Rice) protein is Transcription factor TGAL11.